We begin with the raw amino-acid sequence, 323 residues long: tRNA dimethylallyltransferase (323 aa).

12–19 (GPTAAGKT) is a binding site for ATP. Position 14–19 (14–19 (TAAGKT)) interacts with substrate. Interaction with substrate tRNA regions lie at residues 37-40 (DSAL) and 161-165 (QRLSR).

Belongs to the IPP transferase family. As to quaternary structure, monomer. Mg(2+) is required as a cofactor.

The catalysed reaction is adenosine(37) in tRNA + dimethylallyl diphosphate = N(6)-dimethylallyladenosine(37) in tRNA + diphosphate. In terms of biological role, catalyzes the transfer of a dimethylallyl group onto the adenine at position 37 in tRNAs that read codons beginning with uridine, leading to the formation of N6-(dimethylallyl)adenosine (i(6)A). The sequence is that of tRNA dimethylallyltransferase from Pseudomonas fluorescens (strain Pf0-1).